The sequence spans 109 residues: Cell division suppressor protein YneA (109 aa).

Residues 39–90 enclose the LysM domain; the sequence is SEVNVSEGDSLWALADQYAGKSDMAKADFVSWVEKENNLADGHVEAGDSVVI.

It belongs to the YneA family.

It is found in the cytoplasm. Functionally, inhibits cell division during the SOS response. Affects a later stage of the cell division protein assembly, after the assembly of the Z ring, by probably suppressing recruitment of FtsL and/or DivIC to the division machinery. The sequence is that of Cell division suppressor protein YneA from Listeria monocytogenes serotype 4b (strain CLIP80459).